A 165-amino-acid polypeptide reads, in one-letter code: 3-isopropylmalate dehydratase small subunit (165 aa).

This sequence belongs to the LeuD family. LeuD type 2 subfamily. Heterodimer of LeuC and LeuD.

It carries out the reaction (2R,3S)-3-isopropylmalate = (2S)-2-isopropylmalate. Its pathway is amino-acid biosynthesis; L-leucine biosynthesis; L-leucine from 3-methyl-2-oxobutanoate: step 2/4. Catalyzes the isomerization between 2-isopropylmalate and 3-isopropylmalate, via the formation of 2-isopropylmaleate. The polypeptide is 3-isopropylmalate dehydratase small subunit (Saccharolobus islandicus (strain Y.N.15.51 / Yellowstone #2) (Sulfolobus islandicus)).